Consider the following 134-residue polypeptide: Small ribosomal subunit protein uS12 (134 aa).

Residue Asp89 is modified to 3-methylthioaspartic acid. Positions 109 to 134 are disordered; that stretch reads KRNVSRSKYGAKKGKAGAAPTTGKKK. Basic residues predominate over residues 111 to 123; sequence NVSRSKYGAKKGK. The span at 124 to 134 shows a compositional bias: low complexity; the sequence is AGAAPTTGKKK.

The protein belongs to the universal ribosomal protein uS12 family. Part of the 30S ribosomal subunit. Contacts proteins S8 and S17. May interact with IF1 in the 30S initiation complex.

Its function is as follows. With S4 and S5 plays an important role in translational accuracy. Functionally, interacts with and stabilizes bases of the 16S rRNA that are involved in tRNA selection in the A site and with the mRNA backbone. Located at the interface of the 30S and 50S subunits, it traverses the body of the 30S subunit contacting proteins on the other side and probably holding the rRNA structure together. The combined cluster of proteins S8, S12 and S17 appears to hold together the shoulder and platform of the 30S subunit. This Wolinella succinogenes (strain ATCC 29543 / DSM 1740 / CCUG 13145 / JCM 31913 / LMG 7466 / NCTC 11488 / FDC 602W) (Vibrio succinogenes) protein is Small ribosomal subunit protein uS12.